The following is a 251-amino-acid chain: Ribonuclease PH (251 aa).

Residues arginine 90 and 128 to 130 (GTR) contribute to the phosphate site.

This sequence belongs to the RNase PH family. As to quaternary structure, homohexameric ring arranged as a trimer of dimers.

The enzyme catalyses tRNA(n+1) + phosphate = tRNA(n) + a ribonucleoside 5'-diphosphate. Functionally, phosphorolytic 3'-5' exoribonuclease that plays an important role in tRNA 3'-end maturation. Removes nucleotide residues following the 3'-CCA terminus of tRNAs; can also add nucleotides to the ends of RNA molecules by using nucleoside diphosphates as substrates, but this may not be physiologically important. Probably plays a role in initiation of 16S rRNA degradation (leading to ribosome degradation) during starvation. The chain is Ribonuclease PH from Leifsonia xyli subsp. xyli (strain CTCB07).